Here is a 693-residue protein sequence, read N- to C-terminus: Elongation factor G (693 aa).

Residues 8 to 282 (EKTRNIGIMA…AVIDYLPSPL (275 aa)) enclose the tr-type G domain. Residues 17–24 (AHVDAGKT), 81–85 (DTPGH), and 135–138 (NKMD) contribute to the GTP site.

The protein belongs to the TRAFAC class translation factor GTPase superfamily. Classic translation factor GTPase family. EF-G/EF-2 subfamily.

Its subcellular location is the cytoplasm. In terms of biological role, catalyzes the GTP-dependent ribosomal translocation step during translation elongation. During this step, the ribosome changes from the pre-translocational (PRE) to the post-translocational (POST) state as the newly formed A-site-bound peptidyl-tRNA and P-site-bound deacylated tRNA move to the P and E sites, respectively. Catalyzes the coordinated movement of the two tRNA molecules, the mRNA and conformational changes in the ribosome. This is Elongation factor G from Streptococcus gordonii (strain Challis / ATCC 35105 / BCRC 15272 / CH1 / DL1 / V288).